We begin with the raw amino-acid sequence, 509 residues long: Histidine--tRNA ligase, cytoplasmic (509 aa).

Residue A2 is modified to N-acetylalanine. The region spanning 3-59 (ERAALEELVKLQGERVRGLKQQKASAELIEEEVAKLLKLKAQLGPDESKQKFVLKTP) is the WHEP-TRS domain. Position 66 is a phosphoserine (S66). L-histidine-binding positions include 130-132 (DLT), R157, Q173, D177, R326, and 330-331 (YY). At S356 the chain carries Phosphoserine.

The protein belongs to the class-II aminoacyl-tRNA synthetase family. As to quaternary structure, homodimer.

It localises to the cytoplasm. The enzyme catalyses tRNA(His) + L-histidine + ATP = L-histidyl-tRNA(His) + AMP + diphosphate + H(+). Its function is as follows. Catalyzes the ATP-dependent ligation of histidine to the 3'-end of its cognate tRNA, via the formation of an aminoacyl-adenylate intermediate (His-AMP). Plays a role in axon guidance. The polypeptide is Histidine--tRNA ligase, cytoplasmic (HARS1) (Pongo abelii (Sumatran orangutan)).